The following is a 76-amino-acid chain: Small proline-rich protein 2F (76 aa).

Tandem repeats lie at residues 21–29, 30–38, and 39–47. Residues 21 to 47 are 3 X 9 AA approximate tandem repeats; that stretch reads PKCPEPCSPSVCPEPCPPPKCPEPCPE. Residues 53 to 76 are disordered; it reads SFQQKCPPVQPPPPCQQKCPPKSK.

This sequence belongs to the cornifin (SPRR) family. As to expression, expressed in uterus.

It is found in the cytoplasm. Functionally, cross-linked envelope protein of keratinocytes. It is a keratinocyte protein that first appears in the cell cytosol, but ultimately becomes cross-linked to membrane proteins by transglutaminase. All that results in the formation of an insoluble envelope beneath the plasma membrane. The protein is Small proline-rich protein 2F (Sprr2f) of Mus musculus (Mouse).